A 107-amino-acid polypeptide reads, in one-letter code: Age-related maculopathy susceptibility protein 2 (107 aa).

The segment at 1–21 is disordered; sequence MLRLYPGPMVTEAEGKGGPEM.

Detected in retina and placenta.

The protein localises to the cytoplasm. This is Age-related maculopathy susceptibility protein 2 (ARMS2) from Homo sapiens (Human).